Consider the following 1208-residue polypeptide: Defective chorion protein, FC125 isoform (1208 aa).

Positions 1–19 are cleaved as a signal peptide; the sequence is MRLFSLLPLLALLVVQAAG. Disordered stretches follow at residues 23–60, 184–212, and 268–294; these read VTSD…PSIN, APAP…PDAP, and PAQP…EDPY. Positions 32–41 are enriched in polar residues; the sequence is AGSTTNSTTD. A compositionally biased stretch (low complexity) spans 268–280; that stretch reads PAQPAAAGTDAQA. 5 repeat units span residues 493–518, 519–544, 545–570, 571–596, and 597–622. The 12 X 26 AA approximate tandem repeats, Glu, Met-rich stretch occupies residues 493–788; it reads QNPMMMQQRQ…IQQQQRQMMQ (296 aa). One copy of the 6; approximate repeat lies at 623–652; that stretch reads QNPMMMQQRQWSEEQAKIQHDQQMAQQMAQ. The 7; approximate repeat unit spans residues 653-680; the sequence is QGLMMTEQRQRQWSEDQAKIQQAQQMAQ. Residues 681–696 form an 8; approximate repeat; the sequence is QTPMMMPQMQQRQWTE. The 9; approximate repeat unit spans residues 697–720; sequence DPQMVQQMQQRQWAEDQTRMQMAQ. The stretch at 721–733 is one 10; approximate repeat; it reads QNPMMQQQRQMAE. One copy of the 11; approximate repeat lies at 734–758; it reads NPQMMQQRQWSEEQTKIEQAQQMAQ. The stretch at 759–788 is one 12; approximate repeat; that stretch reads QNQMMMQQMQQRQWSEDQAQIQQQQRQMMQ. Residues 828 to 839 are compositionally biased toward acidic residues; the sequence is EDEDNKAEDDLV. 3 disordered regions span residues 828–875, 944–1010, and 1114–1208; these read EDED…SKSA, RTIN…GSIF, and VQPP…DVDD. Positions 957 to 977 are enriched in polar residues; it reads SESQKSNSNPPTTLTPAPQEQ. 2 stretches are compositionally biased toward acidic residues: residues 1163 to 1178 and 1194 to 1208; these read PEPD…EPSE and NDID…DVDD.

It localises to the secreted. In terms of biological role, required for proper assembly of the eggshell. The polypeptide is Defective chorion protein, FC125 isoform (Drosophila melanogaster (Fruit fly)).